We begin with the raw amino-acid sequence, 237 residues long: DNA replication inhibitor toxin SocB (237 aa).

In terms of assembly, interacts with cognate antitoxin SocA and with beta sliding clamp (dnaN). Degraded by ClpXP, recognition of SocB by ClpX requires SocA.

The protein resides in the cytoplasm. In terms of biological role, toxic component of an atypical type II toxin-antitoxin (TA) system. Upon overexpression in the absence of its cognate antitoxin SocA, leads to inhibition of colony formation, cellular filamentation, incomplete DNA replication and induction of the SOS response. Exercises toxicity by binding the beta sliding clamp (dnaN), blocking DNA replication and leading to premature replication fork collapse and incomplete cell division. Unlike most type II TA systems, the SocB toxin is unstable and targeted by its cognate antitoxin SocA for degradation by ClpXP. Not toxic upon expression in E.coli. This is DNA replication inhibitor toxin SocB from Caulobacter vibrioides (strain NA1000 / CB15N) (Caulobacter crescentus).